Consider the following 577-residue polypeptide: Lysine-specific demethylase 7B (577 aa).

A PHD-type zinc finger spans residues 5-56 (QLYCVCRQPYDVSRFMIECDICKDWFHGSCVEVEEHYAVDIDVYHCPNCDVH). Positions 198–354 (FSDTKMAELV…MQLRCYEMER (157 aa)) constitute a JmjC domain. Thr247 contributes to the substrate binding site. Residues His250 and Asp252 each coordinate Fe cation. Residue Lys267 coordinates substrate. A Fe cation-binding site is contributed by His322. Residues 460–513 (CPSTRSAHERGSHARKTARRLRGHHHHHHRHHHHHHHHHHHNHQHSDGPKAPSH) form a disordered region. A compositionally biased stretch (basic residues) spans 472-502 (HARKTARRLRGHHHHHHRHHHHHHHHHHHNH).

It belongs to the JHDM1 histone demethylase family. JHDM1D subfamily. It depends on Fe(2+) as a cofactor. In terms of tissue distribution, predominantly expressed in brain.

It localises to the nucleus. Its function is as follows. Histone demethylase required for brain development. Specifically demethylates dimethylated 'Lys-9' and 'Lys-27' (H3K9me2 and H3K27me2, respectively) of histone H3 and monomethylated histone H4 'Lys-20' residue (H4K20Me1), thereby playing a central role in histone code. The sequence is that of Lysine-specific demethylase 7B (jhdm1db) from Danio rerio (Zebrafish).